The primary structure comprises 130 residues: Small ribosomal subunit protein uS8 (130 aa).

The protein belongs to the universal ribosomal protein uS8 family. Part of the 30S ribosomal subunit. Contacts proteins S5 and S12.

One of the primary rRNA binding proteins, it binds directly to 16S rRNA central domain where it helps coordinate assembly of the platform of the 30S subunit. The polypeptide is Small ribosomal subunit protein uS8 (Shewanella sp. (strain MR-7)).